The chain runs to 211 residues: Pyridoxine/pyridoxamine 5'-phosphate oxidase (211 aa).

Substrate-binding positions include 7-10 and lysine 65; that span reads RREY. FMN-binding positions include 60–65, 75–76, arginine 81, lysine 82, and glutamine 104; these read RIVLLK and YT. Tyrosine 122, arginine 126, and serine 130 together coordinate substrate. FMN contacts are provided by residues 139-140 and tryptophan 184; that span reads QS. Residue 190 to 192 coordinates substrate; the sequence is RLH. FMN is bound at residue arginine 194.

This sequence belongs to the pyridoxamine 5'-phosphate oxidase family. As to quaternary structure, homodimer. The cofactor is FMN.

The enzyme catalyses pyridoxamine 5'-phosphate + O2 + H2O = pyridoxal 5'-phosphate + H2O2 + NH4(+). The catalysed reaction is pyridoxine 5'-phosphate + O2 = pyridoxal 5'-phosphate + H2O2. Its pathway is cofactor metabolism; pyridoxal 5'-phosphate salvage; pyridoxal 5'-phosphate from pyridoxamine 5'-phosphate: step 1/1. The protein operates within cofactor metabolism; pyridoxal 5'-phosphate salvage; pyridoxal 5'-phosphate from pyridoxine 5'-phosphate: step 1/1. In terms of biological role, catalyzes the oxidation of either pyridoxine 5'-phosphate (PNP) or pyridoxamine 5'-phosphate (PMP) into pyridoxal 5'-phosphate (PLP). This Vibrio parahaemolyticus serotype O3:K6 (strain RIMD 2210633) protein is Pyridoxine/pyridoxamine 5'-phosphate oxidase.